Consider the following 74-residue polypeptide: Protein SlyX homolog (74 aa).

The protein belongs to the SlyX family.

The sequence is that of Protein SlyX homolog from Neisseria meningitidis serogroup C (strain 053442).